We begin with the raw amino-acid sequence, 2547 residues long: Lovastatin diketide synthase mokB (2547 aa).

Residues 10-430 (PTPIAVVGMG…GANAHAIVER (421 aa)) enclose the Ketosynthase family 3 (KS3) domain. Active-site for beta-ketoacyl synthase activity residues include cysteine 183, histidine 318, and histidine 353. Positions 545 to 890 (VFTGQGAQWF…MDLLQGGYPV (346 aa)) are acyl and malonyl transferase. The active-site For malonyltransferase activity is serine 635. The N-terminal hotdog fold stretch occupies residues 941–1079 (HDLIGVQEPL…GLIRAQVDHP (139 aa)). In terms of domain architecture, PKS/mFAS DH spans 941 to 1252 (HDLIGVQEPL…FQSLGAVISD (312 aa)). Histidine 973 acts as the Proton acceptor; for dehydratase activity in catalysis. The interval 973–985 (HVVGSRILFPGAG) is dehydratase-like. The C-terminal hotdog fold stretch occupies residues 1095-1252 (SRKMAPQDLW…FQSLGAVISD (158 aa)). Aspartate 1160 (proton donor; for dehydratase activity) is an active-site residue. Cysteine 1340 and cysteine 1379 are oxidised to a cystine. A methyltransferase region spans residues 1510 to 1547 (YDVVLACQVLHATSNMQRTLNNVRKLLKPGGKLILVET). Residues 2459–2541 (ASTEEEATAL…EVAEVVVKKY (83 aa)) enclose the Carrier domain. Serine 2501 is subject to O-(pantetheine 4'-phosphoryl)serine.

Pantetheine 4'-phosphate serves as cofactor.

It carries out the reaction holo-[2-methylbutanoate polyketide synthase] + 2 malonyl-CoA + S-adenosyl-L-methionine + 2 NADPH + 3 H(+) = (S)-2-methylbutanoyl-[2-methylbutanoate polyketide synthase] + S-adenosyl-L-homocysteine + 2 CO2 + 2 NADP(+) + 2 CoA + H2O. It functions in the pathway polyketide biosynthesis; lovastatin biosynthesis. Diketide synthase; part of the gene cluster that mediates the biosynthesis of monakolin K, also known as lovastatin, and which acts as a potent competitive inhibitor of HMG-CoA reductase. Monakolin K biosynthesis is performed in two stages. The first stage is catalyzed by the nonaketide synthase mokA, which belongs to type I polyketide synthases and catalyzes the iterative nine-step formation of the polyketide. This PKS stage completed by the action of dehydrogenase mokE, which catalyzes the NADPH-dependent reduction of the unsaturated tetra-, penta- and heptaketide intermediates that arise during the mokA-mediated biosynthesis of the nonaketide chain and leads to dihydromonacolin L. Covalently bound dihydromonacolin L is released from mokA by the mokD esterase. Conversion of dihydromonacolin L into monacolin L and then monacolin J is subsequently performed with the participation of molecular oxygen and P450 monoogygenase mokC. Finally, mokF performs the conversion of monacoline J to monacoline K through the addition of the side-chain diketide moiety (2R)-2-methylbutanoate produced by the diketide synthase mokB. The protein is Lovastatin diketide synthase mokB of Monascus pilosus (Red mold).